A 329-amino-acid chain; its full sequence is NADH-quinone oxidoreductase subunit H (329 aa).

9 helical membrane passes run 9–29, 42–62, 75–95, 117–137, 154–174, 188–208, 238–258, 269–291, and 309–329; these read LIKILILVAVFSALGGFATYI, GPCYVGPFGLLQVAADGIKLF, FIFTLAPIIAMVSAFVSMAPI, IGFLFFLAVGAAGIYAPILAG, IQLLSFEVVSTLTILAPLMVV, GGFLDWLVFKQPLAFVLFLIA, LKWGMFFLAEYAHLFAFSFVI, WGFIPGGIAILIKAGFFVFLSMW, and WKIMLPLALLNIVLTGIIILI.

Belongs to the complex I subunit 1 family. As to quaternary structure, NDH-1 is composed of 14 different subunits. Subunits NuoA, H, J, K, L, M, N constitute the membrane sector of the complex.

It is found in the cell inner membrane. The enzyme catalyses a quinone + NADH + 5 H(+)(in) = a quinol + NAD(+) + 4 H(+)(out). NDH-1 shuttles electrons from NADH, via FMN and iron-sulfur (Fe-S) centers, to quinones in the respiratory chain. The immediate electron acceptor for the enzyme in this species is believed to be ubiquinone. Couples the redox reaction to proton translocation (for every two electrons transferred, four hydrogen ions are translocated across the cytoplasmic membrane), and thus conserves the redox energy in a proton gradient. This subunit may bind ubiquinone. This chain is NADH-quinone oxidoreductase subunit H, found in Helicobacter pylori (strain HPAG1).